A 626-amino-acid chain; its full sequence is DNA mismatch repair protein MutL (626 aa).

This sequence belongs to the DNA mismatch repair MutL/HexB family.

Its function is as follows. This protein is involved in the repair of mismatches in DNA. It is required for dam-dependent methyl-directed DNA mismatch repair. May act as a 'molecular matchmaker', a protein that promotes the formation of a stable complex between two or more DNA-binding proteins in an ATP-dependent manner without itself being part of a final effector complex. In Pelodictyon phaeoclathratiforme (strain DSM 5477 / BU-1), this protein is DNA mismatch repair protein MutL.